Here is a 438-residue protein sequence, read N- to C-terminus: Aspartate--tRNA(Asp/Asn) ligase (438 aa).

Glu-176 contributes to the L-aspartate binding site. The segment at 198 to 201 (QLYK) is aspartate. Arg-220 contacts L-aspartate. ATP-binding positions include 220 to 222 (RAE), 228 to 230 (RHL), and Glu-361. 2 residues coordinate Mg(2+): Glu-361 and Ser-364. Positions 364 and 368 each coordinate L-aspartate. 409–412 (GADR) provides a ligand contact to ATP.

This sequence belongs to the class-II aminoacyl-tRNA synthetase family. Type 2 subfamily. In terms of assembly, homodimer. It depends on Mg(2+) as a cofactor.

The protein resides in the cytoplasm. It carries out the reaction tRNA(Asx) + L-aspartate + ATP = L-aspartyl-tRNA(Asx) + AMP + diphosphate. In terms of biological role, aspartyl-tRNA synthetase with relaxed tRNA specificity since it is able to aspartylate not only its cognate tRNA(Asp) but also tRNA(Asn). Reaction proceeds in two steps: L-aspartate is first activated by ATP to form Asp-AMP and then transferred to the acceptor end of tRNA(Asp/Asn). In Methanocaldococcus jannaschii (strain ATCC 43067 / DSM 2661 / JAL-1 / JCM 10045 / NBRC 100440) (Methanococcus jannaschii), this protein is Aspartate--tRNA(Asp/Asn) ligase.